The chain runs to 703 residues: Polyribonucleotide nucleotidyltransferase (703 aa).

The Mg(2+) site is built by aspartate 484 and aspartate 490. The KH domain occupies 551-610; the sequence is PQMIRMQIDPDKIREVIGPGGKTIHKIVDETGCKIDIEDDGSLFIMATDEEAAKKARFFV. One can recognise an S1 motif domain in the interval 620–694; the sequence is GKTYMGTVKR…RQGRVNLSRK (75 aa).

This sequence belongs to the polyribonucleotide nucleotidyltransferase family. The cofactor is Mg(2+).

The protein localises to the cytoplasm. The catalysed reaction is RNA(n+1) + phosphate = RNA(n) + a ribonucleoside 5'-diphosphate. In terms of biological role, involved in mRNA degradation. Catalyzes the phosphorolysis of single-stranded polyribonucleotides processively in the 3'- to 5'-direction. The sequence is that of Polyribonucleotide nucleotidyltransferase from Syntrophomonas wolfei subsp. wolfei (strain DSM 2245B / Goettingen).